A 244-amino-acid polypeptide reads, in one-letter code: ATP synthase subunit a (244 aa).

The next 5 helical transmembrane spans lie at 17–37 (LTNI…AILT), 75–95 (FLAL…LGLP), 112–132 (DPAI…YYGV), 170–190 (LYGN…LATS), and 221–241 (GAIQ…HKIS).

This sequence belongs to the ATPase A chain family. In terms of assembly, F-type ATPases have 2 components, CF(1) - the catalytic core - and CF(0) - the membrane proton channel. CF(1) has five subunits: alpha(3), beta(3), gamma(1), delta(1), epsilon(1). CF(0) has three main subunits: a(1), b(2) and c(9-12). The alpha and beta chains form an alternating ring which encloses part of the gamma chain. CF(1) is attached to CF(0) by a central stalk formed by the gamma and epsilon chains, while a peripheral stalk is formed by the delta and b chains. The F(1)F(0) complex interacts with SpoIIIJ and YqjG; YqgA is found in the same complex.

The protein resides in the cell membrane. Key component of the proton channel; it plays a direct role in the translocation of protons across the membrane. This chain is ATP synthase subunit a, found in Bacillus subtilis (strain 168).